Reading from the N-terminus, the 594-residue chain is Cytoplasmic polyadenylation element-binding protein 1 (594 aa).

The interval 1 to 33 (MQHQVKACGDSKSTTRSLQGNRRSGAASLKKPS) is disordered. The span at 11-22 (SKSTTRSLQGNR) shows a compositional bias: polar residues. 2 consecutive RRM domains span residues 257–364 (RKVF…PWRL) and 381–452 (RTVF…HAET). Positions 519-560 (TGDQTRILPRPPHHQSSHYSPRSHQMMNHDSMESSNQSRGNT) are disordered. The span at 535-560 (SHYSPRSHQMMNHDSMESSNQSRGNT) shows a compositional bias: polar residues.

Interacts with fbf-1.

In terms of biological role, cytoplasmic polyadenylation element binding protein that binds to and regulates the translation of specific mRNAs. Essential for progression through meiosis. Involved in spermatogenesis. The protein is Cytoplasmic polyadenylation element-binding protein 1 (cpb-1) of Caenorhabditis remanei (Caenorhabditis vulgaris).